The chain runs to 474 residues: Pyruvate kinase (474 aa).

Position 37 (R37) interacts with substrate. K(+) contacts are provided by N39, S41, and D71. N39–H42 is a binding site for ATP. Residues R78 and K160 each coordinate ATP. Residue E222 coordinates Mg(2+). Substrate-binding residues include G245, D246, and T278. D246 serves as a coordination point for Mg(2+).

Belongs to the pyruvate kinase family. As to quaternary structure, homotetramer. Requires Mg(2+) as cofactor. The cofactor is K(+).

The catalysed reaction is pyruvate + ATP = phosphoenolpyruvate + ADP + H(+). It functions in the pathway carbohydrate degradation; glycolysis; pyruvate from D-glyceraldehyde 3-phosphate: step 5/5. The protein is Pyruvate kinase (ttuE) of Agrobacterium vitis (Rhizobium vitis).